Consider the following 435-residue polypeptide: 3-ketoacyl-CoA thiolase (435 aa).

The Acyl-thioester intermediate role is filled by C98. Active-site proton acceptor residues include H391 and C421.

It belongs to the thiolase-like superfamily. Thiolase family. As to quaternary structure, heterotetramer of two alpha chains (FadJ) and two beta chains (FadI).

The protein localises to the cytoplasm. The catalysed reaction is an acyl-CoA + acetyl-CoA = a 3-oxoacyl-CoA + CoA. It participates in lipid metabolism; fatty acid beta-oxidation. Functionally, catalyzes the final step of fatty acid oxidation in which acetyl-CoA is released and the CoA ester of a fatty acid two carbons shorter is formed. In Vibrio cholerae serotype O1 (strain ATCC 39315 / El Tor Inaba N16961), this protein is 3-ketoacyl-CoA thiolase.